The primary structure comprises 457 residues: Multidrug resistance protein MdtK (457 aa).

The Cytoplasmic segment spans residues 1–10; sequence MQKYISEARL. A helical transmembrane segment spans residues 11 to 31; the sequence is LLALAIPVILAQIAQTAMGFV. Over 32-52 the chain is Periplasmic; it reads DTVMAGGYSATDMAAVAIGTS. The helical transmembrane segment at 53-73 threads the bilayer; it reads IWLPAILFGHGLLLALTPVIA. At 74–92 the chain is on the cytoplasmic side; the sequence is QLNGSGRRERIAHQVRQGF. Residues 93–113 traverse the membrane as a helical segment; the sequence is WLAGFVSVLIMLVLWNAGYII. At 114 to 126 the chain is on the periplasmic side; it reads RSMENIDPALADK. A helical transmembrane segment spans residues 127-147; sequence AVGYLRALLWGAPGYLFFQVA. Topologically, residues 148-159 are cytoplasmic; it reads RNQCEGLAKTKP. A helical membrane pass occupies residues 160 to 180; it reads GMVMGFIGLLVNIPVNYIFIY. Residues 181 to 191 are Periplasmic-facing; sequence GHFGMPELSGV. Residues 192–212 traverse the membrane as a helical segment; that stretch reads GCGVATAAVYWAMFLAMVSYI. Over 213 to 242 the chain is Cytoplasmic; it reads KRARSMRDIRNEKGTAKPDPAVMKRLIQLG. Residues 243–263 traverse the membrane as a helical segment; that stretch reads LPIALALFFEVTLFAVVALLV. At 264–275 the chain is on the periplasmic side; that stretch reads SPLGIVDVAGHQ. The helical transmembrane segment at 276-296 threads the bilayer; it reads IALNFSSLMFVLPMSLAAAVT. Residues 297–313 are Cytoplasmic-facing; the sequence is IRVGYRLGQGSTLDAQT. A helical transmembrane segment spans residues 314 to 334; it reads AARTGLMVGVCMATLTAIFTV. Residues 335–349 lie on the Periplasmic side of the membrane; sequence SLREQIALLYNDNPE. Residues 350-370 form a helical membrane-spanning segment; it reads VVTLAAHLMLLAAVYQISDSI. The Cytoplasmic portion of the chain corresponds to 371–386; sequence QVIGSGILRGYKDTRS. Residues 387-407 traverse the membrane as a helical segment; that stretch reads IFYITFTAYWVLGLPSGYILA. The Periplasmic segment spans residues 408-417; sequence LTDLVVEPMG. The chain crosses the membrane as a helical span at residues 418-438; it reads PAGFWIGFIIGLTSAAIMMML. Residues 439-457 lie on the Cytoplasmic side of the membrane; sequence RMRFLQRLPSAIILQRASR.

The protein belongs to the multi antimicrobial extrusion (MATE) (TC 2.A.66.1) family. MdtK subfamily.

The protein localises to the cell inner membrane. In terms of biological role, multidrug efflux pump that functions probably as a Na(+)/drug antiporter. The sequence is that of Multidrug resistance protein MdtK from Shigella dysenteriae serotype 1 (strain Sd197).